The primary structure comprises 540 residues: Ecdysone 20-monooxygenase (540 aa).

C488 is a binding site for heme.

Belongs to the cytochrome P450 family. Heme serves as cofactor. As to expression, strong expression by embryonic stage 10 in epidermis, decreases significantly in older embryos. Third instar larvae show expression in the midgut copper cells, Malpighian tubules and fat body. In the adult ovaries, expression is seen in both nurse cells and centripetally migrating follicle cells.

The protein resides in the mitochondrion membrane. It carries out the reaction ecdysone + AH2 + O2 = 20-hydroxyecdysone + A + H2O. Its pathway is steroid biosynthesis; ecdysteroid biosynthesis. Required for CNS development; midline glial cells. Involved in the metabolism of insect hormones; responsible for all ecdysone 20-monooxygenase activity during embryonic, larval and adult stages. May be involved in the breakdown of synthetic insecticides. This chain is Ecdysone 20-monooxygenase (shd), found in Drosophila melanogaster (Fruit fly).